The chain runs to 146 residues: Suppressor APC domain-containing protein 1 (146 aa).

Residues 121–146 (HRKGVTQSTGEVVSQAPPGPKGPTLV) form a disordered region. A compositionally biased stretch (pro residues) spans 137–146 (PPGPKGPTLV).

The polypeptide is Suppressor APC domain-containing protein 1 (Sapcd1) (Mus musculus (Mouse)).